The following is a 691-amino-acid chain: Ribonuclease J (691 aa).

The segment at 1–89 (MTDNNHYENN…TRNYAKEELD (89 aa)) is disordered. The tract at residues 1 to 132 (MTDNNHYENN…KIQVEHLNPH (132 aa)) is loss of region decreases protein stability, still able to interact with RhpA, but has decreased RNase activity even on ssRNA. A compositionally biased stretch (low complexity) spans 10-19 (NESNENSSEN). The segment covering 41–57 (RENAQKNGESSHHEAPS) has biased composition (basic and acidic residues). Positions 58-82 (HHKKEHRPNKKPNNHHKQKHAKTRN) are enriched in basic residues. N6-acetyllysine is present on residues K134 and K140. Zn(2+) is bound by residues H208, H210, D212, H213, H277, and D299. An N6-acetyllysine mark is found at K323, K337, and K397. Substrate is bound at residue 500–504 (HVSGH). K511 carries the post-translational modification N6-acetyllysine. A Zn(2+)-binding site is contributed by H526. N6-acetyllysine is present on residues K547, K634, and K649.

The protein belongs to the metallo-beta-lactamase superfamily. RNA-metabolizing metallo-beta-lactamase-like family. Bacterial RNase J subfamily. Homodimer. Homotetramer; dimer of homodimers. Interacts with RNA helicase RphA, might be a member of a minimal RNA degradosome complex. The cofactor is Zn(2+). In terms of processing, acetylated on nine lysine residues. Some of the residues are acetylated by multiple different mechanisms. RimL is partially responsible for the acetylation of Lys-323, Lys-397 and Lys-649. HPB8_1270 homolog is partially responsible for the acetylation of Lys-323, Lys-397, Lys-511 and Lys-649. Acetyl-phosphate-mediated non-enzymatic acetylation pathway takes part in the acetylation of Lys-134, Lys-323, Lys-397, Lys-511 and Lys-649. Acetylation of the remaining residues Lys-140, Lys-337, Lys-547 and Lys-634 occurs by a yet undetermined mechanism. Acetylation on a number of these residues is important for growth regulation and proper cell morphology.

It is found in the cytoplasm. Its activity is regulated as follows. Catalytic activity is regulated by the balance between homodimers and homotetramers, with homotetramers being the active forms of this enzyme. Acetylation allosterically regulates the homooligomerization state and hence the catalytic activity. Its function is as follows. An RNase that has 5'-3' exoribonuclease and endoribonuclease activity. Degrades 5'-monophosphorylated ssRNA and dsRNA, considerably more active on ssRNA. Association with RhpA significantly increases the dsRNase activity. Degrades RNA substrate with hairpin structures at both ends with low activity, but presence of RhpA significantly increases the activity on this substrate. Stimulates ATPase activity of RNA helicase RhpA. Involved in stabilization of mRNA but apparently not rRNA. This is Ribonuclease J from Helicobacter pylori (strain B128).